A 453-amino-acid polypeptide reads, in one-letter code: tRNA modification GTPase MnmE (453 aa).

(6S)-5-formyl-5,6,7,8-tetrahydrofolate contacts are provided by Arg22, Glu79, and Lys119. The TrmE-type G domain occupies 215 to 376 (GMKVVIAGRP…LKQHLKSLMG (162 aa)). Asn225 is a binding site for K(+). GTP is bound by residues 225–230 (NAGKSS), 244–250 (TEIAGTT), 269–272 (DTAG), and 334–337 (NKAD). Ser229 is a Mg(2+) binding site. K(+) contacts are provided by Thr244, Ile246, and Thr249. Residue Thr250 coordinates Mg(2+). Position 453 (Lys453) interacts with (6S)-5-formyl-5,6,7,8-tetrahydrofolate.

It belongs to the TRAFAC class TrmE-Era-EngA-EngB-Septin-like GTPase superfamily. TrmE GTPase family. As to quaternary structure, homodimer. Heterotetramer of two MnmE and two MnmG subunits. The cofactor is K(+).

It is found in the cytoplasm. In terms of biological role, exhibits a very high intrinsic GTPase hydrolysis rate. Involved in the addition of a carboxymethylaminomethyl (cmnm) group at the wobble position (U34) of certain tRNAs, forming tRNA-cmnm(5)s(2)U34. This chain is tRNA modification GTPase MnmE, found in Shewanella halifaxensis (strain HAW-EB4).